The primary structure comprises 1057 residues: Diacylglycerol kinase iota (1057 aa).

Low complexity predominate over residues 15–59 (AARGPARAPAAAAAAAASPPGPCSGAACAPSAAAGAGAMNPSSSA). Disordered stretches follow at residues 15–74 (AARG…SSGS) and 334–358 (LKASNRKKKRTSFKRKASKRGMEQE). Residues 337 to 352 (SNRKKKRTSFKRKASK) show a composition bias toward basic residues. The DAGKc domain maps to 372 to 507 (PLMKPLLVFV…DRWNLHVERN (136 aa)). ANK repeat units follow at residues 950-979 (DHCSLLHYAAKTGNGEIVKYILDHGPSELL) and 986-1015 (TGETALHKAACQRNRAVCQLLVDAGASLRK). Over residues 1014–1024 (RKTDSKGKTPQ) the composition is skewed to basic and acidic residues. The interval 1014 to 1033 (RKTDSKGKTPQERAQQAGDP) is disordered. A PDZ-binding motif is present at residues 1055 to 1057 (TAV).

The protein belongs to the eukaryotic diacylglycerol kinase family. In terms of assembly, interacts (via PDZ-binding motif) with DLG4; controls the localization of DGKI to the synapse. Interacts (via PDZ-binding motif) with DLG1. Interacts (via PDZ-binding motif) with DLG2. Interacts (via PDZ-binding motif) with DLG3. May interact with RASGRP3; involved in the regulation of RASGRP3 activity. Specifically expressed in brain and retina. In brain, highly expressed in hippocampus, caudate nucleus, occipital pole, cerebral cortex, and cerebellum. Also detected in kidney.

The protein resides in the cell projection. It localises to the axon. Its subcellular location is the dendrite. It is found in the presynapse. The protein localises to the postsynapse. The protein resides in the postsynaptic density. It localises to the synaptic cell membrane. Its subcellular location is the cytoplasmic vesicle. It is found in the secretory vesicle. The protein localises to the synaptic vesicle membrane. The protein resides in the cytoplasm. It localises to the cytosol. Its subcellular location is the nucleus. The enzyme catalyses a 1,2-diacyl-sn-glycerol + ATP = a 1,2-diacyl-sn-glycero-3-phosphate + ADP + H(+). It carries out the reaction 1,2-di-(9Z-octadecenoyl)-sn-glycerol + ATP = 1,2-di-(9Z-octadecenoyl)-sn-glycero-3-phosphate + ADP + H(+). The catalysed reaction is 1-octadecanoyl-2-(5Z,8Z,11Z,14Z-eicosatetraenoyl)-sn-glycerol + ATP = 1-octadecanoyl-2-(5Z,8Z,11Z,14Z-eicosatetraenoyl)-sn-glycero-3-phosphate + ADP + H(+). It catalyses the reaction 1-octadecanoyl-2-(9Z,12Z)-octadecadienoyl-sn-glycerol + ATP = 1-octadecanoyl-2-(9Z,12Z-octadecadienoyl)-sn-glycero-3-phosphate + ADP + H(+). It functions in the pathway lipid metabolism; glycerolipid metabolism. Functionally, diacylglycerol kinase that converts diacylglycerol/DAG into phosphatidic acid/phosphatidate/PA and regulates the respective levels of these two bioactive lipids. Thereby, acts as a central switch between the signaling pathways activated by these second messengers with different cellular targets and opposite effects in numerous biological processes. Has probably no preference for any of the diacylglycerols in terms of the acyl chain composition, especially for the acyl chain at the sn-2 position. By controlling the diacylglycerol/DAG-mediated activation of RASGRP3, negatively regulates the Rap1 signaling pathway. May play a role in presynaptic diacylglycerol/DAG signaling and control neurotransmitter release during metabotropic glutamate receptor-dependent long-term depression. The sequence is that of Diacylglycerol kinase iota from Homo sapiens (Human).